We begin with the raw amino-acid sequence, 224 residues long: Large ribosomal subunit protein uL4 (224 aa).

Residues A52–Q109 form a disordered region.

It belongs to the universal ribosomal protein uL4 family. As to quaternary structure, part of the 50S ribosomal subunit.

Functionally, one of the primary rRNA binding proteins, this protein initially binds near the 5'-end of the 23S rRNA. It is important during the early stages of 50S assembly. It makes multiple contacts with different domains of the 23S rRNA in the assembled 50S subunit and ribosome. In terms of biological role, forms part of the polypeptide exit tunnel. The polypeptide is Large ribosomal subunit protein uL4 (Mycobacterium ulcerans (strain Agy99)).